Reading from the N-terminus, the 305-residue chain is UDP-3-O-acyl-N-acetylglucosamine deacetylase (305 aa).

His79, His238, and Asp242 together coordinate Zn(2+). His265 serves as the catalytic Proton donor.

It belongs to the LpxC family. Requires Zn(2+) as cofactor.

The enzyme catalyses a UDP-3-O-[(3R)-3-hydroxyacyl]-N-acetyl-alpha-D-glucosamine + H2O = a UDP-3-O-[(3R)-3-hydroxyacyl]-alpha-D-glucosamine + acetate. It functions in the pathway glycolipid biosynthesis; lipid IV(A) biosynthesis; lipid IV(A) from (3R)-3-hydroxytetradecanoyl-[acyl-carrier-protein] and UDP-N-acetyl-alpha-D-glucosamine: step 2/6. Catalyzes the hydrolysis of UDP-3-O-myristoyl-N-acetylglucosamine to form UDP-3-O-myristoylglucosamine and acetate, the committed step in lipid A biosynthesis. This Haemophilus influenzae (strain PittEE) protein is UDP-3-O-acyl-N-acetylglucosamine deacetylase.